The chain runs to 192 residues: Probable apo-citrate lyase phosphoribosyl-dephospho-CoA transferase (192 aa).

Belongs to the CitX family.

It catalyses the reaction apo-[citrate lyase ACP] + 2'-(5''-triphospho-alpha-D-ribosyl)-3'-dephospho-CoA = holo-[citrate lyase ACP] + diphosphate. Functionally, transfers 2-(5''-triphosphoribosyl)-3'-dephosphocoenzyme-A on a serine residue to the apo-acyl carrier protein (gamma chain) of the citrate lyase to yield holo-acyl carrier protein. In Streptococcus pyogenes serotype M6 (strain ATCC BAA-946 / MGAS10394), this protein is Probable apo-citrate lyase phosphoribosyl-dephospho-CoA transferase.